Consider the following 914-residue polypeptide: Alanine--tRNA ligase (914 aa).

His-613, His-617, Cys-717, and His-721 together coordinate Zn(2+).

Belongs to the class-II aminoacyl-tRNA synthetase family. Zn(2+) serves as cofactor.

The protein localises to the cytoplasm. It catalyses the reaction tRNA(Ala) + L-alanine + ATP = L-alanyl-tRNA(Ala) + AMP + diphosphate. Functionally, catalyzes the attachment of alanine to tRNA(Ala) in a two-step reaction: alanine is first activated by ATP to form Ala-AMP and then transferred to the acceptor end of tRNA(Ala). Also edits incorrectly charged Ser-tRNA(Ala) and Gly-tRNA(Ala) via its editing domain. The sequence is that of Alanine--tRNA ligase from Pyrococcus abyssi (strain GE5 / Orsay).